Reading from the N-terminus, the 363-residue chain is Holliday junction branch migration complex subunit RuvB (363 aa).

The interval 1–23 (MHKDEDQRLLGPAPLPNDPDRSL) is disordered. The interval 1–184 (MHKDEDQRLL…FGIPIRLNFY (184 aa)) is large ATPase domain (RuvB-L). ATP contacts are provided by residues leucine 23, arginine 24, glycine 65, lysine 68, threonine 69, threonine 70, 131 to 133 (EDY), arginine 174, tyrosine 184, and arginine 221. Threonine 69 provides a ligand contact to Mg(2+). The small ATPAse domain (RuvB-S) stretch occupies residues 185-255 (TIEELEYIVQ…IADEALSRLE (71 aa)). Positions 258–363 (HLGLDPLDRR…QTTLWDGEDD (106 aa)) are head domain (RuvB-H). 3 residues coordinate DNA: arginine 294, arginine 313, and arginine 318.

The protein belongs to the RuvB family. Homohexamer. Forms an RuvA(8)-RuvB(12)-Holliday junction (HJ) complex. HJ DNA is sandwiched between 2 RuvA tetramers; dsDNA enters through RuvA and exits via RuvB. An RuvB hexamer assembles on each DNA strand where it exits the tetramer. Each RuvB hexamer is contacted by two RuvA subunits (via domain III) on 2 adjacent RuvB subunits; this complex drives branch migration. In the full resolvosome a probable DNA-RuvA(4)-RuvB(12)-RuvC(2) complex forms which resolves the HJ.

The protein resides in the cytoplasm. The enzyme catalyses ATP + H2O = ADP + phosphate + H(+). Its function is as follows. The RuvA-RuvB-RuvC complex processes Holliday junction (HJ) DNA during genetic recombination and DNA repair, while the RuvA-RuvB complex plays an important role in the rescue of blocked DNA replication forks via replication fork reversal (RFR). RuvA specifically binds to HJ cruciform DNA, conferring on it an open structure. The RuvB hexamer acts as an ATP-dependent pump, pulling dsDNA into and through the RuvAB complex. RuvB forms 2 homohexamers on either side of HJ DNA bound by 1 or 2 RuvA tetramers; 4 subunits per hexamer contact DNA at a time. Coordinated motions by a converter formed by DNA-disengaged RuvB subunits stimulates ATP hydrolysis and nucleotide exchange. Immobilization of the converter enables RuvB to convert the ATP-contained energy into a lever motion, pulling 2 nucleotides of DNA out of the RuvA tetramer per ATP hydrolyzed, thus driving DNA branch migration. The RuvB motors rotate together with the DNA substrate, which together with the progressing nucleotide cycle form the mechanistic basis for DNA recombination by continuous HJ branch migration. Branch migration allows RuvC to scan DNA until it finds its consensus sequence, where it cleaves and resolves cruciform DNA. This is Holliday junction branch migration complex subunit RuvB from Bartonella tribocorum (strain CIP 105476 / IBS 506).